The primary structure comprises 287 residues: Eukaryotic translation initiation factor 3 subunit G (287 aa).

Residues 163–207 (EEDLESKEKDTKLGPTVPGSGKYVAPGMRGDRPAVTGGAERRSEE) are disordered. The RRM domain occupies 208–286 (NTCRVTNLPE…LVLKVEWTRF (79 aa)).

It belongs to the eIF-3 subunit G family. Component of the eukaryotic translation initiation factor 3 (eIF-3) complex.

It is found in the cytoplasm. Functionally, RNA-binding component of the eukaryotic translation initiation factor 3 (eIF-3) complex, which is involved in protein synthesis of a specialized repertoire of mRNAs and, together with other initiation factors, stimulates binding of mRNA and methionyl-tRNAi to the 40S ribosome. The eIF-3 complex specifically targets and initiates translation of a subset of mRNAs involved in cell proliferation. This subunit can bind 18S rRNA. In Brugia malayi (Filarial nematode worm), this protein is Eukaryotic translation initiation factor 3 subunit G.